A 442-amino-acid chain; its full sequence is MSSRDFSNDLFSINIEENAGCVVSAKVQANPLVTQKCHKEALKTVKKNVVLPGFRKGKAPDNIVESRYSTQVEQELRRLFLRASFEALSQMCDRKPLSPKAVRSSAIDTCNPVNGGSVSFLYEAFPVIPSLPWEQLSLPDPEPVKEISEEDLENGLKNVAYFFATKTPVTRPSQEGDFISLSLYVSKRGDENSTPVAIFENKYFKISEEDMTDSFKARFLNVSTGHRVEEEIGSEDIQSFLNGDLLTFTVNAVIEISSPEMDDEKARELQAESLEDLKKKLRIQLENQAKEAQHQKRFSDAEDALAQLIDFDLPESLLREREELLSREKLLNARLVKYCSDSELEEQKQALLEEAKADARKAVKLLFLTQKVFSEKGLSISREELQYMMDVCSRERFGGYPPKDISNEMIQELVLVARDRLTYRKAIEAISSEKKDLEVVPS.

The PPIase FKBP-type domain maps to 176–259 (GDFISLSLYV…VNAVIEISSP (84 aa)).

The protein belongs to the FKBP-type PPIase family. Tig subfamily.

Its subcellular location is the cytoplasm. It carries out the reaction [protein]-peptidylproline (omega=180) = [protein]-peptidylproline (omega=0). Functionally, involved in protein export. Acts as a chaperone by maintaining the newly synthesized protein in an open conformation. Functions as a peptidyl-prolyl cis-trans isomerase. This chain is Trigger factor, found in Chlamydia trachomatis serovar L2 (strain ATCC VR-902B / DSM 19102 / 434/Bu).